Here is a 551-residue protein sequence, read N- to C-terminus: Protein GPR107 (551 aa).

The first 33 residues, 1 to 33 (MAVRVPLGCTGSFCPRLLPLLALLELLVDPSLG), serve as a signal peptide directing secretion. Over 34–262 (RVHHLALKDD…YLSAGEIPLP (229 aa)) the chain is Extracellular. N-linked (GlcNAc...) asparagine glycosylation occurs at Asn64. Residues 127-183 (GVKVRSPPEAGKQLPEIVFSKDEKVPSRSQEPAVSSNPKDSKVQRTPDGSKAQRSTV) are disordered. Positions 153–164 (SRSQEPAVSSNP) are enriched in polar residues. The N-linked (GlcNAc...) asparagine glycan is linked to Asn209. A helical transmembrane segment spans residues 263-283 (KLYVSMALLFFLSGTVWIHIL). Residues 284–292 (RKRRNDVFK) lie on the Cytoplasmic side of the membrane. A helical membrane pass occupies residues 293–313 (IHWLMAALPFTKSLSLVFHAI). Residues 314–336 (DYHYISSQGFPIEGWAVVYYITH) are Extracellular-facing. A helical membrane pass occupies residues 337 to 357 (LLKGALLFITIALIGTGWAFI). Over 358–367 (KHILSDKDKK) the chain is Cytoplasmic. The helical transmembrane segment at 368–388 (IFMIVIPLQVLANVAYIIIES) threads the bilayer. Residues 389–401 (TEEGTTEYGLWKD) lie on the Extracellular side of the membrane. A helical transmembrane segment spans residues 402–422 (SLFLVDLLCCGAILFPVVWSI). The Cytoplasmic segment spans residues 423 to 443 (RHLQEASATDGKAAINLAKLK). The chain crosses the membrane as a helical span at residues 444 to 466 (LFRHYYVLIVCYIYFTRIIAFLL). Over 467 to 475 (KFAVPFQWK) the chain is Extracellular. Residues 476–495 (WLYQLLDETATLVFFVLTGY) traverse the membrane as a helical segment. Topologically, residues 496-551 (KFRPASDNPYLQLSQEEDDLEMESVVTTSGVMENMKKVKKVSNGAVEPQGSWEGTA) are cytoplasmic.

It belongs to the LU7TM family. In terms of processing, cleaved by FURIN to yield two fragments that remain associated via a disulfide bond. Widely expressed. Not detected in the duodenum, nor in the exocrine pancreas.

The protein resides in the cell membrane. Its subcellular location is the golgi apparatus. It is found in the trans-Golgi network membrane. Functionally, has been proposed to act as a receptor for neuronostatin, a peptide derived from the somatostatin/SST precursor. Involved in blood sugar regulation through the induction of glucagon in response to low glucose. In Rattus norvegicus (Rat), this protein is Protein GPR107 (Gpr107).